Reading from the N-terminus, the 356-residue chain is uncharacterized protein (356 aa).

The protein resides in the cytoplasm. It localises to the nucleus. This is an uncharacterized protein from Saccharomyces cerevisiae (strain ATCC 204508 / S288c) (Baker's yeast).